A 126-amino-acid chain; its full sequence is uncharacterized protein (126 aa).

This is an uncharacterized protein from Rickettsia prowazekii (strain Madrid E).